A 479-amino-acid polypeptide reads, in one-letter code: Bifunctional AAC/APH (479 aa).

One can recognise an N-acetyltransferase domain in the interval 8-180 (ICIRTLIDDD…DCYLMEYRYD (173 aa)). An acetyl-CoA binding site region spans residues 110–153 (KGIGTRYIKLIFEFLKKERNANAVILDPHKNNPRAIRAYQKSGF). The active-site Proton acceptor; for phosphotransferase activity is the aspartate 374. Aspartate 393 serves as a coordination point for a gentamycin.

In the C-terminal section; belongs to the aminoglycoside phosphotransferase family.

The protein resides in the cytoplasm. The enzyme catalyses a gentamycin + GTP = a gentamycin 2''-phosphate + GDP + H(+). In terms of biological role, involved in resistance to gentamicin, tobramycin, and kanamycin. Tobramycin and kanamycin resistance is due to the ACC activity, specified by N-terminal region. The C-terminal region is a kinase that phosphorylates several 4,6-disubstituted aminoglycosides. The protein is Bifunctional AAC/APH (aacA-aphD) of Enterococcus faecalis (strain ATCC 700802 / V583).